We begin with the raw amino-acid sequence, 49 residues long: Splenin (49 aa).

Residues 4–47 (LEDPSVLTKEKLKSELVANNVTLPAGEQRKEVYVELYLQHLTAL) form the LEM-like domain. The segment at 32–36 (RKEVY) is essential for biological activity.

The protein belongs to the thymopoietin family.

In terms of biological role, hormone of the spleen with pleiotropic actions on prothymocytes, mature T-cells, the nicotinic acetylcholine receptor, and pituitary corticotrophs. This chain is Splenin (SP), found in Bos taurus (Bovine).